Consider the following 218-residue polypeptide: Ras-related protein YPT3 (218 aa).

20 to 27 (GDSGVGKS) is a GTP binding site. The short motif at 42–50 (SKSTIGVEF) is the Effector region element. Residues 68–72 (DTAGQ) and 126–129 (NKSD) contribute to the GTP site. A disordered region spans residues 186-205 (GDEGATSSAPPKGETINIKD). S-geranylgeranyl cysteine attachment occurs at residues cysteine 215 and cysteine 216.

The protein belongs to the small GTPase superfamily. Rab family. As to expression, its expression is weak in leaves, higher in stems and roots, but highest in petals, stigma and stamens.

The protein resides in the cell membrane. Functionally, protein transport. Probably involved in vesicular traffic. This Nicotiana plumbaginifolia (Leadwort-leaved tobacco) protein is Ras-related protein YPT3 (YPT3).